We begin with the raw amino-acid sequence, 416 residues long: Phosphatidylinositol 5-phosphate 4-kinase type-2 gamma (416 aa).

The 378-residue stretch at 38 to 415 (ASDPMLSVFM…RFREFISNIF (378 aa)) folds into the PIPK domain.

Post-translationally, phosphorylated, phosphorylation is induced by EGF.

Its subcellular location is the endoplasmic reticulum. The protein localises to the cytoplasm. The catalysed reaction is a 1,2-diacyl-sn-glycero-3-phospho-(1D-myo-inositol-5-phosphate) + ATP = a 1,2-diacyl-sn-glycero-3-phospho-(1D-myo-inositol-4,5-bisphosphate) + ADP + H(+). The enzyme catalyses 1,2-dihexadecanoyl-sn-glycero-3-phospho-(1D-myo-inositol-5-phosphate) + ATP = 1,2-dihexadecanoyl-sn-glycero-3-phospho-(1D-myo-inositol-4,5-bisphosphate) + ADP + H(+). It carries out the reaction 1,2-dihexadecanoyl-sn-glycero-3-phospho-(1D-myo-inositol-5-phosphate) + GTP = 1,2-dihexadecanoyl-sn-glycero-3-phospho-(1D-myo-inositol-4,5-bisphosphate) + GDP + H(+). Phosphatidylinositol 5-phosphate 4-kinase with low enzymatic activity. May be a GTP sensor, has higher GTP-dependent kinase activity than ATP-dependent kinase activity. This is Phosphatidylinositol 5-phosphate 4-kinase type-2 gamma (pip4k2c) from Danio rerio (Zebrafish).